Here is a 154-residue protein sequence, read N- to C-terminus: Protein X (154 aa).

The mitochondrial targeting sequence stretch occupies residues 68–117; sequence PCALRFTSARRMETTVNAHWNLPKVLHKRTLGLSAMSTTDLEAYFKDCVF.

It belongs to the orthohepadnavirus protein X family. As to quaternary structure, may form homodimer. May interact with host CEBPA, CFLAR, CREB1, DDB1, E4F1, HBXIP, HSPD1/HSP60, NFKBIA, POLR2E and SMAD4. Interacts with host SMC5-SMC6 complex and induces its degradation. Interacts with host TRPC4AP; leading to prevent ubiquitination of TRPC4AP. Interacts with host PLSCR1; this interaction promotes ubiquitination and degradation of HBx and impairs HBx-mediated cell proliferation. In terms of processing, a fraction may be phosphorylated in insect cells and HepG2 cells, a human hepatoblastoma cell line. Phosphorylated in vitro by host protein kinase C or mitogen-activated protein kinase. N-acetylated in insect cells.

The protein localises to the host cytoplasm. Its subcellular location is the host nucleus. The protein resides in the host mitochondrion. Its function is as follows. Multifunctional protein that plays a role in silencing host antiviral defenses and promoting viral transcription. Does not seem to be essential for HBV infection. May be directly involved in development of cirrhosis and liver cancer (hepatocellular carcinoma). Most of cytosolic activities involve modulation of cytosolic calcium. The effect on apoptosis is controversial depending on the cell types in which the studies have been conducted. May induce apoptosis by localizing in mitochondria and causing loss of mitochondrial membrane potential. May also modulate apoptosis by binding host CFLAR, a key regulator of the death-inducing signaling complex (DISC). Promotes viral transcription by using the host E3 ubiquitin ligase DDB1 to target the SMC5-SMC6 complex to proteasomal degradation. This host complex would otherwise bind to viral episomal DNA, and prevents its transcription. Moderately stimulates transcription of many different viral and cellular transcription elements. Promoters and enhancers stimulated by HBx contain DNA binding sites for NF-kappa-B, AP-1, AP-2, c-EBP, ATF/CREB, or the calcium-activated factor NF-AT. The polypeptide is Protein X (Hepatitis B virus genotype B2 (isolate Vietnam/9873/1997) (HBV-B)).